The following is a 245-amino-acid chain: Orotidine 5'-phosphate decarboxylase (245 aa).

Substrate contacts are provided by residues D22, K44, 71-80 (DLKFHDIPNT), T131, R192, Q201, G221, and R222. The active-site Proton donor is the K73.

This sequence belongs to the OMP decarboxylase family. Type 1 subfamily. Homodimer.

It catalyses the reaction orotidine 5'-phosphate + H(+) = UMP + CO2. Its pathway is pyrimidine metabolism; UMP biosynthesis via de novo pathway; UMP from orotate: step 2/2. Functionally, catalyzes the decarboxylation of orotidine 5'-monophosphate (OMP) to uridine 5'-monophosphate (UMP). This Escherichia coli O81 (strain ED1a) protein is Orotidine 5'-phosphate decarboxylase.